Reading from the N-terminus, the 190-residue chain is MASQTIPKLKSVLYCDVCTLPVEYCEFEGTLKKCKEWLKSSHPDVYDKLYGEQDLSKDLENTLNVSGTKDSNAEEQPAKLTKEEKRVEREEAKRMASKVLIKTIERTKRKRVTTVQGLDAFGIETKKAAKMLANKFATGASVTKTADKKDEIVVQGDLNYDIFDFILEKFKEVPEDNIKIVEDTKSKKKQ.

Residues 63 to 83 are disordered; it reads LNVSGTKDSNAEEQPAKLTKE. An SUI1 domain is found at 99–170; it reads VLIKTIERTK…DIFDFILEKF (72 aa).

Belongs to the DENR family. In terms of assembly, interacts with the 40S ribosomal subunit.

The protein localises to the cytoplasm. The polypeptide is Translation machinery-associated protein 22 (tma22) (Schizosaccharomyces pombe (strain 972 / ATCC 24843) (Fission yeast)).